The sequence spans 133 residues: Small ribosomal subunit protein uS9 (133 aa).

This sequence belongs to the universal ribosomal protein uS9 family.

In Ureaplasma urealyticum serovar 10 (strain ATCC 33699 / Western), this protein is Small ribosomal subunit protein uS9.